The chain runs to 293 residues: Ribosomal protein L11 methyltransferase (293 aa).

S-adenosyl-L-methionine is bound by residues Thr145, Gly166, Asp188, and Asn230.

It belongs to the methyltransferase superfamily. PrmA family.

The protein localises to the cytoplasm. It carries out the reaction L-lysyl-[protein] + 3 S-adenosyl-L-methionine = N(6),N(6),N(6)-trimethyl-L-lysyl-[protein] + 3 S-adenosyl-L-homocysteine + 3 H(+). Functionally, methylates ribosomal protein L11. The chain is Ribosomal protein L11 methyltransferase from Escherichia coli O81 (strain ED1a).